A 95-amino-acid chain; its full sequence is Blastocyst protein 4 (95 aa).

Residues 1 to 20 (MGAVFAIIGGFALDSPILRL) form the signal peptide.

In Oryctolagus cuniculus (Rabbit), this protein is Blastocyst protein 4.